Consider the following 308-residue polypeptide: Methionyl-tRNA formyltransferase (308 aa).

107-110 (SLLP) contacts (6S)-5,6,7,8-tetrahydrofolate.

Belongs to the Fmt family.

It carries out the reaction L-methionyl-tRNA(fMet) + (6R)-10-formyltetrahydrofolate = N-formyl-L-methionyl-tRNA(fMet) + (6S)-5,6,7,8-tetrahydrofolate + H(+). Attaches a formyl group to the free amino group of methionyl-tRNA(fMet). The formyl group appears to play a dual role in the initiator identity of N-formylmethionyl-tRNA by promoting its recognition by IF2 and preventing the misappropriation of this tRNA by the elongation apparatus. This chain is Methionyl-tRNA formyltransferase, found in Carboxydothermus hydrogenoformans (strain ATCC BAA-161 / DSM 6008 / Z-2901).